The chain runs to 246 residues: Polyhedrin (246 aa).

The protein belongs to the polyhedrin family.

Its function is as follows. Major component of the virus occlusion bodies, which are large proteinaceous structures (polyhedra), that protect the virus from the outside environment for extended periods until they are ingested by insect larvae. The polypeptide is Polyhedrin (PH) (Lepidoptera (butterflies and moths)).